The following is a 313-amino-acid chain: Proline iminopeptidase (313 aa).

Positions 35–298 (KPVVILHGGP…TPGAGHSAFE (264 aa)) constitute an AB hydrolase-1 domain. Ser110 (nucleophile) is an active-site residue. Asp266 is an active-site residue. The active-site Proton donor is the His294.

This sequence belongs to the peptidase S33 family.

The protein resides in the cytoplasm. The enzyme catalyses Release of N-terminal proline from a peptide.. Its function is as follows. Specifically catalyzes the removal of N-terminal proline residues from peptides. This is Proline iminopeptidase (pip) from Xylella fastidiosa (strain 9a5c).